Reading from the N-terminus, the 276-residue chain is Probable transposase for insertion sequence element IS702 (276 aa).

In terms of domain architecture, DDE Tnp4 spans 118–256 (MDVTESPIER…SNQYRNRHRR (139 aa)). A divalent metal cation-binding residues include Asp119, Asp170, Asp190, and Glu234.

Belongs to the transposase 11 family. It depends on a divalent metal cation as a cofactor.

Involved in the transposition of the insertion sequence. This Microchaete diplosiphon (Fremyella diplosiphon) protein is Probable transposase for insertion sequence element IS702.